A 1070-amino-acid chain; its full sequence is Inactive tyrosine-protein kinase 7 (1070 aa).

An N-terminal signal peptide occupies residues 1 to 30 (MGAARGSPARPRRLPLLSVLLLPLLGGTQT). 7 consecutive Ig-like C2-type domains span residues 31-120 (AIVF…ASFN), 128-218 (PVVL…FTLS), 225-317 (ARVV…EATL), 309-407 (PPII…VNIT), 412-497 (PSWL…ARVQ), 503-586 (KFTP…HVQL), and 578-680 (GQIR…APLY). Residues 31–704 (AIVFIKQPSS…SPPPYKMIQT (674 aa)) lie on the Extracellular side of the membrane. A disulfide bridge connects residues Cys-53 and Cys-101. Residues Asn-116, Asn-175, Asn-184, Asn-214, Asn-268, and Asn-283 are each glycosylated (N-linked (GlcNAc...) asparagine). A disulfide bridge links Cys-150 with Cys-200. 2 disulfides stabilise this stretch: Cys-246/Cys-301 and Cys-343/Cys-391. N-linked (GlcNAc...) asparagine glycosylation is found at Asn-405, Asn-463, Asn-567, and Asn-646. 3 disulfides stabilise this stretch: Cys-433/Cys-481, Cys-524/Cys-570, and Cys-613/Cys-664. Residues 705 to 725 (IGLSVGAAVAYIIAVLGLMFY) form a helical membrane-spanning segment. Residues 726-1070 (CKKRCKAKRL…LGDSTVDSKP (345 aa)) lie on the Cytoplasmic side of the membrane. Disordered stretches follow at residues 736–759 (QKQP…NGQP) and 773–793 (GSGP…HFPR). The segment at 794–1070 (SSLQPITTLG…LGDSTVDSKP (277 aa)) is interaction with CTNNB1. The 271-residue stretch at 796 to 1066 (LQPITTLGKS…IASALGDSTV (271 aa)) folds into the Protein kinase; inactive domain. Position 1064 is a phosphoserine (Ser-1064).

This sequence belongs to the protein kinase superfamily. Tyr protein kinase family. Insulin receptor subfamily. Interacts with CTNNB1. In terms of processing, MMP14 cleaves PTK7 between Pro-621 and Leu-622 generating an N-terminal soluble (70 kDa) fragment and a membrane C-terminal (50 kDa) fragment. Proteolysis by MMP14 regulates PTK7 function in non-canonical Wnt signaling pathway. Highly expressed in lung, liver, pancreas, kidney, placenta and melanocytes. Weakly expressed in thyroid gland, ovary, brain, heart and skeletal muscle. Also expressed in erythroleukemia cells. But not expressed in colon.

The protein resides in the membrane. The protein localises to the cell junction. In terms of biological role, inactive tyrosine kinase involved in Wnt signaling pathway. Component of both the non-canonical (also known as the Wnt/planar cell polarity signaling) and the canonical Wnt signaling pathway. Functions in cell adhesion, cell migration, cell polarity, proliferation, actin cytoskeleton reorganization and apoptosis. Has a role in embryogenesis, epithelial tissue organization and angiogenesis. The polypeptide is Inactive tyrosine-protein kinase 7 (PTK7) (Homo sapiens (Human)).